Consider the following 112-residue polypeptide: Transcriptional regulator WhiD (112 aa).

In terms of domain architecture, 4Fe-4S Wbl-type spans 22–86; sequence ACRGVDSSLF…GGLTEDEREE (65 aa). [4Fe-4S] cluster is bound by residues Cys-23, Cys-53, Cys-56, and Cys-62.

This sequence belongs to the WhiB family. In terms of assembly, the 4Fe-4S form is a monomer; upon oxidation forms a disulfide-bonded homodimer. It depends on [4Fe-4S] cluster as a cofactor. Post-translationally, can be nitrosylated by NO, 8 NO react per cluster. These complexes are quite stable under anaerobic conditions, but degrade slowly aerobically. In terms of processing, upon Fe-S cluster removal intramolecular disulfide bonds are formed.

The protein localises to the cytoplasm. Functionally, acts as a transcriptional regulator. Probably redox-responsive. The apo- but not holo-form probably binds DNA. Plays a positive role in prespore maturation and the initiation of sporulation septation. The polypeptide is Transcriptional regulator WhiD (whiD) (Streptomyces coelicolor (strain ATCC BAA-471 / A3(2) / M145)).